The sequence spans 190 residues: Remorin (190 aa).

Residues 1-12 (MAEEQKTSKVDV) are compositionally biased toward basic and acidic residues. Disordered regions lie at residues 1–45 (MAEE…VESK) and 50–69 (VEKP…SADR). Position 14 is a phosphoserine (S14). T58 carries the post-translational modification Phosphothreonine. A coiled-coil region spans residues 92–147 (EKSKAENRAQKKISDVHAWENSKKAAVEAQLRKIEEKLEKKKAQYGEKMKNKVAAI).

It belongs to the remorin family. May polymerize to form filamentous structures. Expressed in roots, leaves, stems, flowers and siliques, with a maximal expression in apical regions.

Functionally, exhibits a non sequence-specific DNA-binding activity. The protein is Remorin (DBP) of Arabidopsis thaliana (Mouse-ear cress).